Reading from the N-terminus, the 170-residue chain is Large ribosomal subunit protein uL18c (170 aa).

The N-terminal 63 residues, 1–63 (MLASPALAGA…QADRIARHVR (63 aa)), are a transit peptide targeting the chloroplast.

This sequence belongs to the universal ribosomal protein uL18 family. In terms of assembly, part of the 50S ribosomal subunit; contacts the 5S rRNA.

The protein localises to the plastid. It is found in the chloroplast. Binds 5S rRNA, forms part of the central protuberance of the 50S subunit. This Oryza sativa subsp. japonica (Rice) protein is Large ribosomal subunit protein uL18c (RPL18).